The chain runs to 317 residues: Ribosomal RNA small subunit methyltransferase H (317 aa).

S-adenosyl-L-methionine is bound by residues 37–39 (AGH), aspartate 56, phenylalanine 85, aspartate 106, and glutamine 113.

It belongs to the methyltransferase superfamily. RsmH family.

The protein resides in the cytoplasm. It catalyses the reaction cytidine(1402) in 16S rRNA + S-adenosyl-L-methionine = N(4)-methylcytidine(1402) in 16S rRNA + S-adenosyl-L-homocysteine + H(+). Its function is as follows. Specifically methylates the N4 position of cytidine in position 1402 (C1402) of 16S rRNA. The polypeptide is Ribosomal RNA small subunit methyltransferase H (Lactococcus lactis subsp. cremoris (strain SK11)).